A 259-amino-acid polypeptide reads, in one-letter code: Tryptophan synthase alpha chain (259 aa).

Active-site proton acceptor residues include Glu42 and Asp53.

It belongs to the TrpA family. As to quaternary structure, tetramer of two alpha and two beta chains.

The catalysed reaction is (1S,2R)-1-C-(indol-3-yl)glycerol 3-phosphate + L-serine = D-glyceraldehyde 3-phosphate + L-tryptophan + H2O. Its pathway is amino-acid biosynthesis; L-tryptophan biosynthesis; L-tryptophan from chorismate: step 5/5. Its function is as follows. The alpha subunit is responsible for the aldol cleavage of indoleglycerol phosphate to indole and glyceraldehyde 3-phosphate. This Erythrobacter litoralis (strain HTCC2594) protein is Tryptophan synthase alpha chain.